The sequence spans 171 residues: Neuronal vesicle trafficking-associated protein 2 (171 aa).

Positions methionine 1–glycine 21 are disordered. The Cytoplasmic portion of the chain corresponds to methionine 1–threonine 71. A helical; Signal-anchor for type II membrane protein transmembrane segment spans residues valine 72–tyrosine 92. Topologically, residues lysine 93–histidine 171 are lumenal.

It belongs to the NSG family.

The protein localises to the membrane. It is found in the golgi apparatus. Its subcellular location is the trans-Golgi network membrane. It localises to the cell projection. The protein resides in the dendrite. The protein localises to the endosome membrane. It is found in the early endosome membrane. Its subcellular location is the late endosome membrane. It localises to the lysosome lumen. The protein resides in the cytoplasmic vesicle membrane. The protein localises to the golgi stack membrane. It is found in the endosome. Its subcellular location is the multivesicular body membrane. This is Neuronal vesicle trafficking-associated protein 2 from Bos taurus (Bovine).